Consider the following 296-residue polypeptide: Formamidopyrimidine-DNA glycosylase (296 aa).

Pro-2 (schiff-base intermediate with DNA) is an active-site residue. Residue Glu-3 is the Proton donor of the active site. Lys-61 acts as the Proton donor; for beta-elimination activity in catalysis. Positions 95, 122, and 169 each coordinate DNA. Residues Asn-255–Pro-289 form an FPG-type zinc finger. The active-site Proton donor; for delta-elimination activity is the Arg-279.

It belongs to the FPG family. In terms of assembly, monomer. Requires Zn(2+) as cofactor.

The enzyme catalyses Hydrolysis of DNA containing ring-opened 7-methylguanine residues, releasing 2,6-diamino-4-hydroxy-5-(N-methyl)formamidopyrimidine.. It catalyses the reaction 2'-deoxyribonucleotide-(2'-deoxyribose 5'-phosphate)-2'-deoxyribonucleotide-DNA = a 3'-end 2'-deoxyribonucleotide-(2,3-dehydro-2,3-deoxyribose 5'-phosphate)-DNA + a 5'-end 5'-phospho-2'-deoxyribonucleoside-DNA + H(+). Its function is as follows. Involved in base excision repair of DNA damaged by oxidation or by mutagenic agents. Acts as a DNA glycosylase that recognizes and removes damaged bases. Has a preference for oxidized purines, such as 7,8-dihydro-8-oxoguanine (8-oxoG). Has AP (apurinic/apyrimidinic) lyase activity and introduces nicks in the DNA strand. Cleaves the DNA backbone by beta-delta elimination to generate a single-strand break at the site of the removed base with both 3'- and 5'-phosphates. This is Formamidopyrimidine-DNA glycosylase from Thermobifida fusca (strain YX).